A 239-amino-acid polypeptide reads, in one-letter code: Homeobox protein Nkx-2.8 (239 aa).

The span at 1–11 (MATSGRLSFTV) shows a compositional bias: polar residues. The tract at residues 1-87 (MATSGRLSFT…GSDAEKRKKR (87 aa)) is disordered. Residues 21 to 32 (DAQHLPRREPEP) show a composition bias toward basic and acidic residues. The span at 62–79 (SPPDSSQRPSARPASPGS) shows a compositional bias: low complexity. Positions 84 to 143 (RKKRRVLFSKAQTLELERRFRQQRYLSAPEREQLASLLRLTPTQVKIWFQNHRYKLKRAR) form a DNA-binding region, homeobox.

This sequence belongs to the NK-2 homeobox family.

It is found in the nucleus. This Homo sapiens (Human) protein is Homeobox protein Nkx-2.8 (NKX2-8).